A 104-amino-acid chain; its full sequence is Large ribosomal subunit protein eL42 (104 aa).

It belongs to the eukaryotic ribosomal protein eL42 family. In terms of assembly, component of the large ribosomal subunit. Mature ribosomes consist of a small (40S) and a large (60S) subunit. The 40S subunit contains about 32 different proteins and 1 molecule of RNA (18S). The 60S subunit contains about 42 different proteins and 3 molecules of RNA (28S, 5.8S and 5S).

The protein localises to the cytoplasm. Functionally, component of the ribosome, a large ribonucleoprotein complex responsible for the synthesis of proteins in the cell. The small ribosomal subunit (SSU) binds messenger RNAs (mRNAs) and translates the encoded message by selecting cognate aminoacyl-transfer RNA (tRNA) molecules. The large subunit (LSU) contains the ribosomal catalytic site termed the peptidyl transferase center (PTC), which catalyzes the formation of peptide bonds, thereby polymerizing the amino acids delivered by tRNAs into a polypeptide chain. The nascent polypeptides leave the ribosome through a tunnel in the LSU and interact with protein factors that function in enzymatic processing, targeting, and the membrane insertion of nascent chains at the exit of the ribosomal tunnel. The chain is Large ribosomal subunit protein eL42 from Plasmodium falciparum (isolate 3D7).